The sequence spans 292 residues: Elongation factor Ts (292 aa).

The interval 79 to 82 (TDFV) is involved in Mg(2+) ion dislocation from EF-Tu.

Belongs to the EF-Ts family.

The protein resides in the cytoplasm. Its function is as follows. Associates with the EF-Tu.GDP complex and induces the exchange of GDP to GTP. It remains bound to the aminoacyl-tRNA.EF-Tu.GTP complex up to the GTP hydrolysis stage on the ribosome. This Xylella fastidiosa (strain 9a5c) protein is Elongation factor Ts.